A 371-amino-acid chain; its full sequence is Opine oxidase subunit B (371 aa).

As to quaternary structure, heterodimer of a subunit A and a subunit B.

The protein operates within opine metabolism; octopine degradation. Oxidative cleavage of octopine into L-arginine and pyruvate. This chain is Opine oxidase subunit B (ooxB), found in Rhizobium meliloti (Ensifer meliloti).